A 245-amino-acid polypeptide reads, in one-letter code: MTSPATLVLIPARMAATRLPGKPLLDIAGLPMVVQVLRRAQAAEIGRVAVATDAPEIAAAVTAHGGEVVMTRADHPSGSDRIFEALQTLDPDRKIETVINLQGDFPTIRPEQIGAVLEPLADPAVDIATLAAEIHTEEEATNPNVVKVIGSPLAADRLRALYFTRATAPWGDGPRYHHIGLYGYRRAALERFVALPPSPLELREKLEQLRALEAGMRIDVGIVDTVPRGVDTPADLETARRVLGG.

This sequence belongs to the KdsB family.

The protein localises to the cytoplasm. The enzyme catalyses 3-deoxy-alpha-D-manno-oct-2-ulosonate + CTP = CMP-3-deoxy-beta-D-manno-octulosonate + diphosphate. It functions in the pathway nucleotide-sugar biosynthesis; CMP-3-deoxy-D-manno-octulosonate biosynthesis; CMP-3-deoxy-D-manno-octulosonate from 3-deoxy-D-manno-octulosonate and CTP: step 1/1. The protein operates within bacterial outer membrane biogenesis; lipopolysaccharide biosynthesis. Its function is as follows. Activates KDO (a required 8-carbon sugar) for incorporation into bacterial lipopolysaccharide in Gram-negative bacteria. The protein is 3-deoxy-manno-octulosonate cytidylyltransferase of Rhodopseudomonas palustris (strain ATCC BAA-98 / CGA009).